The sequence spans 552 residues: Chaperonin GroEL (552 aa).

ATP-binding positions include 30–33 (TLGP), K51, 87–91 (DGTTT), G415, and D499.

This sequence belongs to the chaperonin (HSP60) family. In terms of assembly, forms a cylinder of 14 subunits composed of two heptameric rings stacked back-to-back. Interacts with the co-chaperonin GroES.

The protein localises to the cytoplasm. The enzyme catalyses ATP + H2O + a folded polypeptide = ADP + phosphate + an unfolded polypeptide.. Functionally, together with its co-chaperonin GroES, plays an essential role in assisting protein folding. The GroEL-GroES system forms a nano-cage that allows encapsulation of the non-native substrate proteins and provides a physical environment optimized to promote and accelerate protein folding. The polypeptide is Chaperonin GroEL (Hamiltonella defensa subsp. Acyrthosiphon pisum (strain 5AT)).